The sequence spans 68 residues: Large ribosomal subunit protein uL29 (68 aa).

It belongs to the universal ribosomal protein uL29 family.

The protein is Large ribosomal subunit protein uL29 of Rhodopseudomonas palustris (strain BisB18).